A 359-amino-acid polypeptide reads, in one-letter code: Probable mannitol dehydrogenase (359 aa).

Residues cysteine 50, histidine 72, cysteine 103, cysteine 106, cysteine 109, cysteine 117, and cysteine 165 each coordinate Zn(2+).

The protein belongs to the zinc-containing alcohol dehydrogenase family. The cofactor is Zn(2+).

It carries out the reaction D-mannitol + NAD(+) = D-mannose + NADH + H(+). Functionally, oxidizes mannitol to mannose. Provides the initial step by which translocated mannitol is committed to central metabolism and, by regulating mannitol pool size, is important in regulating salt tolerance at the cellular level. This is Probable mannitol dehydrogenase (CAD1) from Medicago sativa (Alfalfa).